The chain runs to 86 residues: Large ribosomal subunit protein bL27 (86 aa).

The span at 1–10 shows a compositional bias: gly residues; the sequence is MAQKKGGGST. Residues 1 to 21 are disordered; that stretch reads MAQKKGGGSTRNGRDSESKRL.

It belongs to the bacterial ribosomal protein bL27 family.

The protein is Large ribosomal subunit protein bL27 of Cupriavidus pinatubonensis (strain JMP 134 / LMG 1197) (Cupriavidus necator (strain JMP 134)).